Consider the following 294-residue polypeptide: uncharacterized protein (294 aa).

2 disordered regions span residues 1 to 148 (MFLR…LEKP) and 268 to 294 (DEAA…GKGL). Serine 34 and serine 35 each carry phosphoserine. Over residues 35–44 (SSENSGSDWD) the composition is skewed to low complexity. Positions 52–62 (DVGHPKTKDSG) are enriched in basic and acidic residues. 2 positions are modified to phosphoserine: serine 71 and serine 90. 2 stretches are compositionally biased toward basic and acidic residues: residues 73–92 (PSKE…DSLK) and 278–294 (GLER…GKGL).

This is an uncharacterized protein from Homo sapiens (Human).